The primary structure comprises 155 residues: Small ribosomal subunit protein uS7cz/uS7cy (155 aa).

It belongs to the universal ribosomal protein uS7 family. Part of the 30S ribosomal subunit.

The protein resides in the plastid. It localises to the chloroplast. Its function is as follows. One of the primary rRNA binding proteins, it binds directly to 16S rRNA where it nucleates assembly of the head domain of the 30S subunit. The sequence is that of Small ribosomal subunit protein uS7cz/uS7cy (rps7-A) from Guizotia abyssinica (Niger).